The following is a 312-amino-acid chain: DNA-directed RNA polymerase subunit alpha (312 aa).

Residues 1 to 226 are alpha N-terminal domain (alpha-NTD); the sequence is MIEFEKPNIT…EHLNLFTNLT (226 aa). An alpha C-terminal domain (alpha-CTD) region spans residues 243–312; it reads DDRILERTIE…DLGLGLKNDK (70 aa).

It belongs to the RNA polymerase alpha chain family. In terms of assembly, homodimer. The RNAP catalytic core consists of 2 alpha, 1 beta, 1 beta' and 1 omega subunit. When a sigma factor is associated with the core the holoenzyme is formed, which can initiate transcription.

The catalysed reaction is RNA(n) + a ribonucleoside 5'-triphosphate = RNA(n+1) + diphosphate. DNA-dependent RNA polymerase catalyzes the transcription of DNA into RNA using the four ribonucleoside triphosphates as substrates. The chain is DNA-directed RNA polymerase subunit alpha from Streptococcus sanguinis (strain SK36).